Reading from the N-terminus, the 715-residue chain is Palmitoyltransferase ZDHHC5 (715 aa).

The Cytoplasmic portion of the chain corresponds to 1 to 13; that stretch reads MPAESGKRFKPSK. Residues 14–34 form a helical membrane-spanning segment; sequence YVPVSAAAIFLVGATTLFFAF. The Extracellular portion of the chain corresponds to 35–38; sequence TCPG. Residues 39–59 form a helical membrane-spanning segment; that stretch reads LSLYVSPAVPIYNAIMFLFVL. Over 60–148 the chain is Cytoplasmic; that stretch reads ANFSMATFMD…NCIGRRNYRY (89 aa). At Y91 the chain carries Phosphotyrosine. In terms of domain architecture, DHHC spans 104-154; sequence KWCATCRFYRPPRCSHCSVCDNCVEEFDHHCPWVNNCIGRRNYRYFFLFLL. C134 acts as the S-palmitoyl cysteine intermediate in catalysis. A helical membrane pass occupies residues 149–169; it reads FFLFLLSLTAHIMGVFGFGLL. At 170–191 the chain is on the extracellular side; it reads YVLYHIEELSGVRTAVTMAVMC. A helical transmembrane segment spans residues 192-212; it reads VAGLFFIPVAGLTGFHVVLVA. Residues 213-715 are Cytoplasmic-facing; it reads RGRTTNEQVT…VGGTTYEISV (503 aa). S247 bears the Phosphoserine mark. The segment at 289–715 is disordered; that stretch reads GELRRTKSKG…VGGTTYEISV (427 aa). T294 is modified (phosphothreonine). A phosphoserine mark is found at S296 and S299. T303 bears the Phosphothreonine mark. Position 345 is a phosphoserine (S345). Phosphothreonine is present on residues T348 and T350. Residues 359-373 are compositionally biased toward low complexity; sequence SSSSTSAAMPHSSSA. Phosphoserine is present on residues S380, S398, S406, and S409. At T411 the chain carries Phosphothreonine. Phosphoserine occurs at positions 415, 425, 429, and 432. Positions 422 to 432 are enriched in low complexity; that stretch reads SSGSRSSSLKS. T436 is subject to Phosphothreonine. The segment covering 442–478 has biased composition (polar residues); that stretch reads QLQSIRSEGTTSTSYKSLANQTRNGSLSYDSLLTPSD. S529 and S554 each carry phosphoserine. Position 617 is an omega-N-methylarginine (R617). S621 is subject to Phosphoserine. Residue T659 is modified to Phosphothreonine. Residues 666 to 677 show a composition bias toward polar residues; that stretch reads LKTTYSKSNGQP. S684 and S694 each carry phosphoserine. Position 697 is an omega-N-methylarginine (R697).

The protein belongs to the DHHC palmitoyltransferase family. ERF2/ZDHHC9 subfamily.

It is found in the cell membrane. It carries out the reaction L-cysteinyl-[protein] + hexadecanoyl-CoA = S-hexadecanoyl-L-cysteinyl-[protein] + CoA. Its function is as follows. Palmitoyltransferase that catalyzes the addition of palmitate onto various protein substrates such as CTNND2, CD36, GSDMD, NLRP3, NOD1, NOD2, STAT3 and S1PR1 thus plays a role in various biological processes including cell adhesion, inflammation, fatty acid uptake, bacterial sensing or cardiac functions. Plays an important role in the regulation of synapse efficacy by mediating palmitoylation of delta-catenin/CTNND2, thereby increasing synaptic delivery and surface stabilization of alpha-amino-3-hydroxy-5-methyl-4-isoxazole propionic acid receptors (AMPARs). Under basal conditions, remains at the synaptic membrane through FYN-mediated phosphorylation that prevents association with endocytic proteins. Neuronal activity enhances the internalization and trafficking of DHHC5 from spines to dendritic shafts where it palmitoylates delta-catenin/CTNND2. Regulates cell adhesion at the plasma membrane by palmitoylating GOLGA7B and DSG2. Plays a role in innate immune response by mediating the palmitoylation of NOD1 and NOD2 and their proper recruitment to the bacterial entry site and phagosomes. Also participates in fatty acid uptake by palmitoylating CD36 and thereby targeting it to the plasma membrane. Upon binding of fatty acids to CD36, gets phosphorylated by LYN leading to inactivation and subsequent CD36 caveolar endocytosis. Controls oligodendrocyte development by catalyzing STAT3 palmitoylation. Acts as a regulator of inflammatory response by mediating palmitoylation of NLRP3 and GSDMD. Palmitoylates NLRP3 to promote inflammasome assembly and activation. Activates pyroptosis by catalyzing palmitoylation of gasdermin-D (GSDMD), thereby promoting membrane translocation and pore formation of GSDMD. The polypeptide is Palmitoyltransferase ZDHHC5 (ZDHHC5) (Pan troglodytes (Chimpanzee)).